Here is a 70-residue protein sequence, read N- to C-terminus: Large ribosomal subunit protein eL38 (70 aa).

It belongs to the eukaryotic ribosomal protein eL38 family.

In Plutella xylostella (Diamondback moth), this protein is Large ribosomal subunit protein eL38 (RpL38).